The chain runs to 223 residues: Oxaloacetate tautomerase FAHD1, mitochondrial (223 aa).

Residues 1–30 (MATSMIQRMFKQGTKIVCVGRNYAAHAKEL) constitute a mitochondrion transit peptide. Glutamate 67, glutamate 69, and aspartate 98 together coordinate Mg(2+).

Belongs to the FAH family. The cofactor is Mg(2+). Mn(2+) serves as cofactor.

The protein resides in the mitochondrion. It catalyses the reaction oxaloacetate = enol-oxaloacetate. Its function is as follows. Tautomerase that converts enol-oxaloacetate, a strong inhibitor of succinate dehydrogenase, to the physiological keto form of oxaloacetate. This chain is Oxaloacetate tautomerase FAHD1, mitochondrial, found in Arabidopsis thaliana (Mouse-ear cress).